The sequence spans 506 residues: WD repeat-containing protein 55 homolog (506 aa).

A compositionally biased stretch (basic and acidic residues) spans 1-11 (MHRHDCFKTPA). Disordered stretches follow at residues 1 to 20 (MHRH…DDID), 33 to 87 (QEVL…SDDS), and 100 to 132 (AKRR…DEDD). Residues 33-48 (QEVLNESESDDDEYDL) show a composition bias toward acidic residues. A compositionally biased stretch (low complexity) spans 61-74 (GNISSNESISSDGS). Residues 78-87 (NAEDTDSDDS) show a composition bias toward acidic residues. WD repeat units lie at residues 156-195 (RLED…NKLL), 200-239 (VHAK…LKKL), 243-281 (AHDD…AIFE), 284-323 (EVED…LYVQ), 326-365 (PYEE…YHCD), and 410-449 (QHNM…DFGD). A disordered region spans residues 480 to 506 (DMTKEQDDDDNDDGGNNTTAAGSNNVT). A compositionally biased stretch (low complexity) spans 493–506 (GGNNTTAAGSNNVT).

This sequence belongs to the WD repeat WDR55 family.

The polypeptide is WD repeat-containing protein 55 homolog (Drosophila mojavensis (Fruit fly)).